The chain runs to 148 residues: Nickel and cobalt resistance protein CnrR (148 aa).

Positions Met-1–Ala-26 are cleaved as a signal peptide. At Leu-28 to Gln-148 the chain is on the periplasmic side. Residues Asn-54–Leu-117 are a coiled coil.

It to A.xylosoxydans NccX.

It is found in the periplasm. Its function is as follows. CnrH alone is able to activate cnr expression, while both CnrY and CrnR (CnrX) are needed for nickel induction of CnrH. Has been suggested to bind nickel. This is Nickel and cobalt resistance protein CnrR (cnrR) from Cupriavidus metallidurans (strain ATCC 43123 / DSM 2839 / NBRC 102507 / CH34) (Ralstonia metallidurans).